A 319-amino-acid chain; its full sequence is D-alanine--D-alanine ligase B (319 aa).

An ATP-grasp domain is found at K117–A312. ATP is bound at residue A143 to T198. Residues D266, E279, and N281 each contribute to the Mg(2+) site.

Belongs to the D-alanine--D-alanine ligase family. It depends on Mg(2+) as a cofactor. The cofactor is Mn(2+).

It is found in the cytoplasm. The enzyme catalyses 2 D-alanine + ATP = D-alanyl-D-alanine + ADP + phosphate + H(+). It functions in the pathway cell wall biogenesis; peptidoglycan biosynthesis. Functionally, cell wall formation. The polypeptide is D-alanine--D-alanine ligase B (Pseudomonas syringae pv. tomato (strain ATCC BAA-871 / DC3000)).